Here is a 638-residue protein sequence, read N- to C-terminus: MVVRSIIVSPPTTITYYHPMSIGLLVHPLSPHIPPASSPSASTAGNHHQRIFSLAETCSDMSQLKQLHAFTLRTTYPEEPATLFLYGKILQLSSSFSDVNYAFRVFDSIENHSSFMWNTLIRACAHDVSRKEEAFMLYRKMLERGESSPDKHTFPFVLKACAYIFGFSEGKQVHCQIVKHGFGGDVYVNNGLIHLYGSCGCLDLARKVFDEMPERSLVSWNSMIDALVRFGEYDSALQLFREMQRSFEPDGYTMQSVLSACAGLGSLSLGTWAHAFLLRKCDVDVAMDVLVKNSLIEMYCKCGSLRMAEQVFQGMQKRDLASWNAMILGFATHGRAEEAMNFFDRMVDKRENVRPNSVTFVGLLIACNHRGFVNKGRQYFDMMVRDYCIEPALEHYGCIVDLIARAGYITEAIDMVMSMPMKPDAVIWRSLLDACCKKGASVELSEEIARNIIGTKEDNESSNGNCSGAYVLLSRVYASASRWNDVGIVRKLMSEHGIRKEPGCSSIEINGISHEFFAGDTSHPQTKQIYQQLKVIDDRLRSIGYLPDRSQAPLVDATNDGSKEYSLRLHSERLAIAFGLINLPPQTPIRIFKNLRVCNDCHEVTKLISKVFNTEIIVRDRVRFHHFKDGSCSCLDYW.

The transit peptide at 1 to 40 (MVVRSIIVSPPTTITYYHPMSIGLLVHPLSPHIPPASSPS) directs the protein to the chloroplast and mitochondrion. PPR repeat units lie at residues 82–112 (TLFLYGKILQLSSSFSDVNYAFRVFDSIENH), 113–148 (SSFMWNTLIRACAHDVSRKEEAFMLYRKMLERGESS), 150–184 (DKHTFPFVLKACAYIFGFSEGKQVHCQIVKHGFGG), 185–215 (DVYVNNGLIHLYGSCGCLDLARKVFDEMPER), 216–246 (SLVSWNSMIDALVRFGEYDSALQLFREMQRS), 250–280 (DGYTMQSVLSACAGLGSLSLGTWAHAFLLRK), 288–318 (DVLVKNSLIEMYCKCGSLRMAEQVFQGMQKR), 319–353 (DLASWNAMILGFATHGRAEEAMNFFDRMVDKRENV), 356–390 (NSVTFVGLLIACNHRGFVNKGRQYFDMMVRDYCIE), and 392–422 (ALEHYGCIVDLIARAGYITEAIDMVMSMPMK). A type E motif region spans residues 427–510 (IWRSLLDACC…EPGCSSIEIN (84 aa)). The segment at 511–541 (GISHEFFAGDTSHPQTKQIYQQLKVIDDRLR) is type E(+) motif. The tract at residues 542 to 638 (SIGYLPDRSQ…DGSCSCLDYW (97 aa)) is type DYW motif.

Belongs to the PPR family. PCMP-H subfamily. In terms of assembly, interacts with ORRM1. Interacts with VAR3/OZ1.

It localises to the plastid. The protein localises to the chloroplast. It is found in the mitochondrion. Functionally, involved in multiple sites RNA editing events in chloroplasts. Involved in the editing of the site 2 of ndhB (ndhB-2) and site 3 of ndhD (ndhD-3) transcripts, which are two plastid-encoded subunits of the chloroplast NAD(P)H dehydrogenase (NDH) complex. Required for the activity of the NDH complex of the photosynthetic electron transport chain. This chain is Pentatricopeptide repeat-containing protein At1g59720, chloroplastic/mitochondrial (PCMP-H51), found in Arabidopsis thaliana (Mouse-ear cress).